Here is a 1373-residue protein sequence, read N- to C-terminus: DNA-directed RNA polymerase subunit beta (1373 aa).

The protein belongs to the RNA polymerase beta chain family. In terms of assembly, the RNAP catalytic core consists of 2 alpha, 1 beta, 1 beta' and 1 omega subunit. When a sigma factor is associated with the core the holoenzyme is formed, which can initiate transcription.

It carries out the reaction RNA(n) + a ribonucleoside 5'-triphosphate = RNA(n+1) + diphosphate. DNA-dependent RNA polymerase catalyzes the transcription of DNA into RNA using the four ribonucleoside triphosphates as substrates. In Rickettsia akari (strain Hartford), this protein is DNA-directed RNA polymerase subunit beta.